Here is a 321-residue protein sequence, read N- to C-terminus: Protein APA1 (321 aa).

The segment at 50-70 (SLIEKPERGQTPEGEDPLGKP) is disordered. Lysine 54 serves as a coordination point for substrate. Threonine 60 bears the Phosphothreonine mark. Substrate-binding positions include 93–94 (NK), asparagine 145, and 151–154 (GSSL). The active-site Nucleophile is the histidine 158. Residues glutamine 160, 273–275 (NST), methionine 280, and lysine 284 each bind substrate.

Belongs to the ATP adenylyltransferase family. Monomer. It depends on a divalent metal cation as a cofactor. Post-translationally, the N-terminus is blocked.

The protein localises to the cytoplasm. It localises to the nucleus. The enzyme catalyses ADP + ATP + H(+) = P(1),P(4)-bis(5'-adenosyl) tetraphosphate + phosphate. It catalyses the reaction sulfate + ADP + H(+) = adenosine 5'-phosphosulfate + phosphate. Its function is as follows. Ap4A phosphorylase catalyzes the phosphorolytic degradation of bis(5'-adenosyl) tetraphosphate (Ap4A) into ADP and ATP. Can also use other Np4N' nucleotides (where N and N' stand for A,C,G or U) as substrates with equal efficiency. Cannot catalyze the reverse reaction. Additionally, this enzyme can also catalyze the phosphorolytic degradation of adenosine 5'-phosphosulfate (AMPS) into ADP and sulfate, the reversible exchange reaction between inorganic phosphate and the beta-phosphate of a nucleoside diphosphate (NDP), and the synthesis of Ap4A from AMPS plus ATP. This is Protein APA1 from Saccharomyces cerevisiae (strain ATCC 204508 / S288c) (Baker's yeast).